Reading from the N-terminus, the 193-residue chain is Ion-translocating oxidoreductase complex subunit A (193 aa).

Helical transmembrane passes span 5-25 (LLLF…FLGL), 47-67 (FVMT…LVPL), 72-92 (LRTM…EMVV), 102-122 (LLGI…VALL), 134-154 (ALYG…FAAI), and 171-191 (AIAL…SGLV).

It belongs to the NqrDE/RnfAE family. The complex is composed of six subunits: RnfA, RnfB, RnfC, RnfD, RnfE and RnfG.

It localises to the cell inner membrane. In terms of biological role, part of a membrane-bound complex that couples electron transfer with translocation of ions across the membrane. The chain is Ion-translocating oxidoreductase complex subunit A from Cronobacter sakazakii (strain ATCC BAA-894) (Enterobacter sakazakii).